A 125-amino-acid polypeptide reads, in one-letter code: Small ribosomal subunit protein uS12 (125 aa).

Residues 1-23 (MATVNQLVRKGRTKRTAKSSVPA) are disordered. Asp89 bears the 3-methylthioaspartic acid mark. The interval 102-125 (ADTAGVDKRRQGRSKYGAKRPKKK) is disordered. Over residues 111–125 (RQGRSKYGAKRPKKK) the composition is skewed to basic residues.

This sequence belongs to the universal ribosomal protein uS12 family. In terms of assembly, part of the 30S ribosomal subunit. Contacts proteins S8 and S17. May interact with IF1 in the 30S initiation complex.

With S4 and S5 plays an important role in translational accuracy. In terms of biological role, interacts with and stabilizes bases of the 16S rRNA that are involved in tRNA selection in the A site and with the mRNA backbone. Located at the interface of the 30S and 50S subunits, it traverses the body of the 30S subunit contacting proteins on the other side and probably holding the rRNA structure together. The combined cluster of proteins S8, S12 and S17 appears to hold together the shoulder and platform of the 30S subunit. This Halorhodospira halophila (strain DSM 244 / SL1) (Ectothiorhodospira halophila (strain DSM 244 / SL1)) protein is Small ribosomal subunit protein uS12.